We begin with the raw amino-acid sequence, 200 residues long: 3-isopropylmalate dehydratase small subunit (200 aa).

The protein belongs to the LeuD family. LeuD type 1 subfamily. In terms of assembly, heterodimer of LeuC and LeuD.

The catalysed reaction is (2R,3S)-3-isopropylmalate = (2S)-2-isopropylmalate. Its pathway is amino-acid biosynthesis; L-leucine biosynthesis; L-leucine from 3-methyl-2-oxobutanoate: step 2/4. Functionally, catalyzes the isomerization between 2-isopropylmalate and 3-isopropylmalate, via the formation of 2-isopropylmaleate. This chain is 3-isopropylmalate dehydratase small subunit, found in Yersinia pestis bv. Antiqua (strain Antiqua).